The primary structure comprises 704 residues: Protein arginine N-methyltransferase 7 (704 aa).

2 SAM-dependent MTase PRMT-type domains span residues 14–356 (ENTW…YSLW) and 366–704 (SQPA…EKSE).

This sequence belongs to the class I-like SAM-binding methyltransferase superfamily. Protein arginine N-methyltransferase family. PRMT7 subfamily.

Essential arginine methyltransferase that can both catalyze the formation of omega-N monomethylarginine (MMA) and symmetrical dimethylarginine (sDMA). Specifically mediates the symmetrical dimethylation of arginine residues in the small nuclear ribonucleoproteins SmD1 and SmD3. This Drosophila grimshawi (Hawaiian fruit fly) protein is Protein arginine N-methyltransferase 7 (Art7).